The sequence spans 330 residues: Protein pelota homolog (330 aa).

This sequence belongs to the eukaryotic release factor 1 family. Pelota subfamily. Monomer. A divalent metal cation serves as cofactor.

Its subcellular location is the cytoplasm. Its function is as follows. May function in recognizing stalled ribosomes, interact with stem-loop structures in stalled mRNA molecules, and effect endonucleolytic cleavage of the mRNA. May play a role in the release non-functional ribosomes and degradation of damaged mRNAs. Has endoribonuclease activity. This Pyrobaculum islandicum (strain DSM 4184 / JCM 9189 / GEO3) protein is Protein pelota homolog.